A 383-amino-acid chain; its full sequence is ATP phosphoribosyltransferase regulatory subunit (383 aa).

This sequence belongs to the class-II aminoacyl-tRNA synthetase family. HisZ subfamily. As to quaternary structure, heteromultimer composed of HisG and HisZ subunits.

It is found in the cytoplasm. It functions in the pathway amino-acid biosynthesis; L-histidine biosynthesis; L-histidine from 5-phospho-alpha-D-ribose 1-diphosphate: step 1/9. In terms of biological role, required for the first step of histidine biosynthesis. May allow the feedback regulation of ATP phosphoribosyltransferase activity by histidine. The polypeptide is ATP phosphoribosyltransferase regulatory subunit (Neisseria meningitidis serogroup C (strain 053442)).